Consider the following 348-residue polypeptide: MNDRQAALDQALKQIEKQFGKGSIMKLGEHSDQNISTISSGSLALDIALGVGGYPRGRIIEVYGPESSGKTTVALHAIAEVQAQGGTAAFIDAEHALDPAYAKNLGVNIDELLLSQPDTGEQALEIAEALVRSGAVDMLVIDSVAALVPRAEIEGEMGDAHVGLQARLMSQALRKLSGVINKSKTIAIFINQIREKVGVMFGNPEITPGGRALKFYSTVRLEVRRAEQLKQGTDVMGNKTKIKVVKNKVAPPFRIAEVDIMYGEGISREGELVDMAAEVDVINKSGSWYSYKEERIGQGRENAKQYLKEHTDIRDEISKRVREEYEIDGTNKEPLDENEETLSLLDDE.

Position 64-71 (64-71 (GPESSGKT)) interacts with ATP. Positions 326–335 (EIDGTNKEPL) are enriched in basic and acidic residues. The segment at 326–348 (EIDGTNKEPLDENEETLSLLDDE) is disordered. Over residues 336–348 (DENEETLSLLDDE) the composition is skewed to acidic residues.

Belongs to the RecA family.

It is found in the cytoplasm. Its function is as follows. Can catalyze the hydrolysis of ATP in the presence of single-stranded DNA, the ATP-dependent uptake of single-stranded DNA by duplex DNA, and the ATP-dependent hybridization of homologous single-stranded DNAs. It interacts with LexA causing its activation and leading to its autocatalytic cleavage. This chain is Protein RecA, found in Listeria innocua serovar 6a (strain ATCC BAA-680 / CLIP 11262).